Consider the following 463-residue polypeptide: Nuclear hormone receptor family member nhr-79 (463 aa).

A DNA-binding region (nuclear receptor) is located at residues arginine 3–alanine 81. NR C4-type zinc fingers lie at residues cysteine 6–cysteine 27 and cysteine 43–cysteine 64. Residues arginine 83 to phenylalanine 119 are disordered. The region spanning tyrosine 203–tyrosine 463 is the NR LBD domain.

The protein belongs to the nuclear hormone receptor family.

Its subcellular location is the nucleus. Functionally, orphan nuclear receptor. This chain is Nuclear hormone receptor family member nhr-79 (nhr-79), found in Caenorhabditis elegans.